The chain runs to 258 residues: NAD kinase (258 aa).

Asp51 functions as the Proton acceptor in the catalytic mechanism. NAD(+) is bound by residues Asp51–Gly52, Lys56, Asn119–Asp120, Lys130, Asp149, Thr160–Ser165, and Ala184.

The protein belongs to the NAD kinase family. A divalent metal cation serves as cofactor.

The protein resides in the cytoplasm. It catalyses the reaction NAD(+) + ATP = ADP + NADP(+) + H(+). Its function is as follows. Involved in the regulation of the intracellular balance of NAD and NADP, and is a key enzyme in the biosynthesis of NADP. Catalyzes specifically the phosphorylation on 2'-hydroxyl of the adenosine moiety of NAD to yield NADP. This is NAD kinase from Thermotoga sp. (strain RQ2).